Here is a 377-residue protein sequence, read N- to C-terminus: Gibberellin 20 oxidase 1 (377 aa).

The 101-residue stretch at 222 to 322 folds into the Fe2OG dioxygenase domain; it reads ENDSIMRLNY…RKSLAFFLCP (101 aa). 3 residues coordinate Fe cation: H247, D249, and H303. R313 is an active-site residue.

Belongs to the iron/ascorbate-dependent oxidoreductase family. GA20OX subfamily. Fe(2+) is required as a cofactor. L-ascorbate serves as cofactor. In terms of tissue distribution, highly expressed in stems and inflorescence tissues. Detected in seeds, roots, leaves and siliques.

The enzyme catalyses gibberellin A12 + 2 2-oxoglutarate + 3 O2 + H(+) = gibberellin A9 + 2 succinate + 3 CO2 + 2 H2O. It catalyses the reaction gibberellin A12 + 2-oxoglutarate + O2 = gibberellin A15 + succinate + CO2. The catalysed reaction is gibberellin A15 + 2-oxoglutarate + O2 = gibberellin A24 + succinate + CO2 + H2O. It carries out the reaction gibberellin A53 + 2-oxoglutarate + O2 = gibberellin A44 + succinate + CO2. It functions in the pathway plant hormone biosynthesis; gibberellin biosynthesis. In terms of biological role, key oxidase enzyme in the biosynthesis of gibberellin that catalyzes the conversion of GA12 to GA9, via a three-step oxidation at C-20 of the GA skeleton. GA53 is less effectively oxidized than GA12 and is only oxidized one step to GA44. Involved in the promotion of the floral transition, fertility and silique elongation, but plays only a minor role in elongation of seedling organs. Acts redundantly with GA20OX2. The sequence is that of Gibberellin 20 oxidase 1 (GA20OX1) from Arabidopsis thaliana (Mouse-ear cress).